Consider the following 363-residue polypeptide: Elongation factor Tu, chloroplastic (363 aa).

Residues 1–189 (TLTAAITMAL…NVDEYIPTPE (189 aa)) form the tr-type G domain. GTP contacts are provided by residues 55–59 (DCPGH) and 110–113 (NKED).

This sequence belongs to the TRAFAC class translation factor GTPase superfamily. Classic translation factor GTPase family. EF-Tu/EF-1A subfamily.

The protein localises to the plastid. The protein resides in the chloroplast. It carries out the reaction GTP + H2O = GDP + phosphate + H(+). GTP hydrolase that promotes the GTP-dependent binding of aminoacyl-tRNA to the A-site of ribosomes during protein biosynthesis. In Gymnochlora stellata, this protein is Elongation factor Tu, chloroplastic (tufA).